We begin with the raw amino-acid sequence, 308 residues long: Ribonuclease Z (308 aa).

The Zn(2+) site is built by histidine 61, histidine 63, aspartate 65, histidine 66, histidine 139, aspartate 210, and histidine 268. The Proton acceptor role is filled by aspartate 65.

This sequence belongs to the RNase Z family. In terms of assembly, homodimer. The cofactor is Zn(2+).

The catalysed reaction is Endonucleolytic cleavage of RNA, removing extra 3' nucleotides from tRNA precursor, generating 3' termini of tRNAs. A 3'-hydroxy group is left at the tRNA terminus and a 5'-phosphoryl group is left at the trailer molecule.. In terms of biological role, zinc phosphodiesterase, which displays some tRNA 3'-processing endonuclease activity. Probably involved in tRNA maturation, by removing a 3'-trailer from precursor tRNA. This Natronomonas pharaonis (strain ATCC 35678 / DSM 2160 / CIP 103997 / JCM 8858 / NBRC 14720 / NCIMB 2260 / Gabara) (Halobacterium pharaonis) protein is Ribonuclease Z.